Consider the following 680-residue polypeptide: Trehalase (680 aa).

A disordered region spans residues 1 to 27 (MVLHAQPPDQSTETAREAKALAGATDG).

The protein belongs to the glycosyl hydrolase 15 family. Homomultimer. Requires phosphate as cofactor.

It carries out the reaction alpha,alpha-trehalose + H2O = alpha-D-glucose + beta-D-glucose. It functions in the pathway glycan degradation; trehalose degradation; D-glucose from alpha,alpha-trehalose: step 1/1. In terms of biological role, catalyzes the hydrolysis of alpha,alpha-trehalose into two molecules of D-glucose. In Mycobacterium tuberculosis (strain ATCC 25618 / H37Rv), this protein is Trehalase.